The chain runs to 407 residues: Queuine tRNA-ribosyltransferase-like protein (407 aa).

It belongs to the queuine tRNA-ribosyltransferase family.

The protein is Queuine tRNA-ribosyltransferase-like protein of Plasmodium falciparum (isolate 3D7).